The primary structure comprises 160 residues: MITLGIDPGFARCGYAFIEAKNSAYKIVDSGLIETFQNQEYNQRLSFIYTQLDELIKKYKPNNAAIEELFFSKNTKTAIKVAEARGVIILALTLNNIEFQEYKPKEVKSQITGNGNANKDAMMKMVNLFTGSNIIQDDTADAVAIALAHASRNRIFNDIK.

Residues Asp-7, Glu-67, and Asp-138 contribute to the active site. Residues Asp-7, Glu-67, and Asp-138 each contribute to the Mg(2+) site.

Belongs to the RuvC family. In terms of assembly, homodimer which binds Holliday junction (HJ) DNA. The HJ becomes 2-fold symmetrical on binding to RuvC with unstacked arms; it has a different conformation from HJ DNA in complex with RuvA. In the full resolvosome a probable DNA-RuvA(4)-RuvB(12)-RuvC(2) complex forms which resolves the HJ. Mg(2+) serves as cofactor.

It localises to the cytoplasm. The enzyme catalyses Endonucleolytic cleavage at a junction such as a reciprocal single-stranded crossover between two homologous DNA duplexes (Holliday junction).. Functionally, the RuvA-RuvB-RuvC complex processes Holliday junction (HJ) DNA during genetic recombination and DNA repair. Endonuclease that resolves HJ intermediates. Cleaves cruciform DNA by making single-stranded nicks across the HJ at symmetrical positions within the homologous arms, yielding a 5'-phosphate and a 3'-hydroxyl group; requires a central core of homology in the junction. The consensus cleavage sequence is 5'-(A/T)TT(C/G)-3'. Cleavage occurs on the 3'-side of the TT dinucleotide at the point of strand exchange. HJ branch migration catalyzed by RuvA-RuvB allows RuvC to scan DNA until it finds its consensus sequence, where it cleaves and resolves the cruciform DNA. The sequence is that of Crossover junction endodeoxyribonuclease RuvC from Brachyspira hyodysenteriae (strain ATCC 49526 / WA1).